A 280-amino-acid polypeptide reads, in one-letter code: Formamidopyrimidine-DNA glycosylase (280 aa).

Catalysis depends on Pro-2, which acts as the Schiff-base intermediate with DNA. Residue Glu-3 is the Proton donor of the active site. Lys-58 acts as the Proton donor; for beta-elimination activity in catalysis. DNA contacts are provided by His-91, Arg-110, and Arg-152. The FPG-type zinc finger occupies Asn-237–Lys-271. Arg-261 serves as the catalytic Proton donor; for delta-elimination activity.

The protein belongs to the FPG family. As to quaternary structure, monomer. Zn(2+) serves as cofactor.

The catalysed reaction is Hydrolysis of DNA containing ring-opened 7-methylguanine residues, releasing 2,6-diamino-4-hydroxy-5-(N-methyl)formamidopyrimidine.. It catalyses the reaction 2'-deoxyribonucleotide-(2'-deoxyribose 5'-phosphate)-2'-deoxyribonucleotide-DNA = a 3'-end 2'-deoxyribonucleotide-(2,3-dehydro-2,3-deoxyribose 5'-phosphate)-DNA + a 5'-end 5'-phospho-2'-deoxyribonucleoside-DNA + H(+). Its function is as follows. Involved in base excision repair of DNA damaged by oxidation or by mutagenic agents. Acts as a DNA glycosylase that recognizes and removes damaged bases. Has a preference for oxidized purines, such as 7,8-dihydro-8-oxoguanine (8-oxoG). Has AP (apurinic/apyrimidinic) lyase activity and introduces nicks in the DNA strand. Cleaves the DNA backbone by beta-delta elimination to generate a single-strand break at the site of the removed base with both 3'- and 5'-phosphates. The protein is Formamidopyrimidine-DNA glycosylase of Hydrogenovibrio crunogenus (strain DSM 25203 / XCL-2) (Thiomicrospira crunogena).